The sequence spans 319 residues: Probable carboxylesterase 5 (319 aa).

An N-acetylmethionine modification is found at Met1. The short motif at His79–Gly81 is the Involved in the stabilization of the negatively charged intermediate by the formation of the oxyanion hole element. Catalysis depends on residues Ser163, Asp262, and His294.

It belongs to the 'GDXG' lipolytic enzyme family. In terms of tissue distribution, expressed in roots, leaves, stems, flowers and siliques.

It catalyses the reaction a carboxylic ester + H2O = an alcohol + a carboxylate + H(+). Carboxylesterase acting on esters with varying acyl chain length. The chain is Probable carboxylesterase 5 (CXE5) from Arabidopsis thaliana (Mouse-ear cress).